Reading from the N-terminus, the 275-residue chain is Large ribosomal subunit protein uL2 (275 aa).

The tract at residues 212–275 (NRHRGIRPQT…DKLIISRRKK (64 aa)) is disordered. Residues 257–275 (YKTRRKKPSDKLIISRRKK) are compositionally biased toward basic residues.

This sequence belongs to the universal ribosomal protein uL2 family. As to quaternary structure, part of the 50S ribosomal subunit. Forms a bridge to the 30S subunit in the 70S ribosome.

In terms of biological role, one of the primary rRNA binding proteins. Required for association of the 30S and 50S subunits to form the 70S ribosome, for tRNA binding and peptide bond formation. It has been suggested to have peptidyltransferase activity; this is somewhat controversial. Makes several contacts with the 16S rRNA in the 70S ribosome. The chain is Large ribosomal subunit protein uL2 from Nitratiruptor sp. (strain SB155-2).